The chain runs to 100 residues: uncharacterized protein (100 aa).

It is found in the mitochondrion. This is an uncharacterized protein from Arabidopsis thaliana (Mouse-ear cress).